The following is a 303-amino-acid chain: N-acetyl-D-glucosamine kinase (303 aa).

Residues 4 to 11 (GFDIGGTK) and 133 to 140 (GVGGGLVL) each bind ATP. Positions 157, 177, 179, and 184 each coordinate Zn(2+).

This sequence belongs to the ROK (NagC/XylR) family. NagK subfamily.

It catalyses the reaction N-acetyl-D-glucosamine + ATP = N-acetyl-D-glucosamine 6-phosphate + ADP + H(+). It participates in cell wall biogenesis; peptidoglycan recycling. Catalyzes the phosphorylation of N-acetyl-D-glucosamine (GlcNAc) derived from cell-wall degradation, yielding GlcNAc-6-P. This Salmonella paratyphi B (strain ATCC BAA-1250 / SPB7) protein is N-acetyl-D-glucosamine kinase.